A 253-amino-acid chain; its full sequence is MKTLQAKLSNKKNNFVPYIMAGDHERGLEGLNETIQLLEQAGSSAIEIGVPFSDPVADGPVIEQAGLRALAKNVSLSKILDSLKSIETEVPLVIMTYFNPVYQFGIENFVAALESTAVKGLIIPDLPKEHEAYIKPFITDKDICLVPLVSLTTPISRQKELVVDAEGFIYAVAINGVTGKENAYSNQLDHHLETLSKLTDIPVLTGFGISTLTDVERFNKVSAGVIVGSKIVRDLHENKESDVIKFIENAINF.

Residues E47 and D58 each act as proton acceptor in the active site.

This sequence belongs to the TrpA family. In terms of assembly, tetramer of two alpha and two beta chains.

It catalyses the reaction (1S,2R)-1-C-(indol-3-yl)glycerol 3-phosphate + L-serine = D-glyceraldehyde 3-phosphate + L-tryptophan + H2O. It functions in the pathway amino-acid biosynthesis; L-tryptophan biosynthesis; L-tryptophan from chorismate: step 5/5. Its function is as follows. The alpha subunit is responsible for the aldol cleavage of indoleglycerol phosphate to indole and glyceraldehyde 3-phosphate. The polypeptide is Tryptophan synthase alpha chain (Lactococcus lactis subsp. cremoris (strain MG1363)).